We begin with the raw amino-acid sequence, 28 residues long: U15-ctenitoxin-Co1a (28 aa).

2 cysteine pairs are disulfide-bonded: Cys3-Cys17 and Cys10-Cys22.

In terms of tissue distribution, expressed by the venom gland.

The protein localises to the secreted. Functionally, insecticidal neurotoxin that reversibly inhibits the N-methyl-D-aspartate (NMDA)-subtype of ionotropic glutamate receptor (GRIN) and inhibits inactivation of insect sodium channels (Nav). In vivo, is highly toxic to insects. In Ctenus ornatus (Brazilian spider), this protein is U15-ctenitoxin-Co1a.